The following is a 422-amino-acid chain: Mitogen-activated protein kinase spm1 (422 aa).

A Protein kinase domain is found at 21–314 (FKVVKELGQG…VDDALEHPYL (294 aa)). ATP-binding positions include 27–35 (LGQGAYGIV) and Lys-52. Asp-149 functions as the Proton acceptor in the catalytic mechanism. Phosphothreonine is present on Thr-186. A TXY motif is present at residues 186–188 (TEY). At Tyr-188 the chain carries Phosphotyrosine. The segment at 359–422 (RRRSHPTNPT…DHKSDDNRHN (64 aa)) is disordered. The segment covering 364–379 (PTNPTVNIPQPAQTVP) has biased composition (polar residues). Residues 380–397 (SNDNGSFNVSSSSSSQTS) show a composition bias toward low complexity. The segment covering 411 to 422 (AIDHKSDDNRHN) has biased composition (basic and acidic residues).

It belongs to the protein kinase superfamily. CMGC Ser/Thr protein kinase family. MAP kinase subfamily. Mg(2+) is required as a cofactor. Post-translationally, dually phosphorylated on Thr-186 and Tyr-188, which activates the enzyme.

The catalysed reaction is L-seryl-[protein] + ATP = O-phospho-L-seryl-[protein] + ADP + H(+). It carries out the reaction L-threonyl-[protein] + ATP = O-phospho-L-threonyl-[protein] + ADP + H(+). With respect to regulation, activated by tyrosine and threonine phosphorylation by skh1/pek1. Functionally, regulates cell integrity and functions coordinately with the protein kinase C pathway (pck1 and pck2). Involved the regulation of wall architecture, cell shape, cytokinesis in exponential and stationary phase, and metabolism of ions. This Schizosaccharomyces pombe (strain 972 / ATCC 24843) (Fission yeast) protein is Mitogen-activated protein kinase spm1 (spm1).